The primary structure comprises 322 residues: Protein-L-isoaspartate O-methyltransferase (322 aa).

Residues 1–101 (MSGERAKRFP…AKQGDRSAAP (101 aa)) are disordered. Residues 14-29 (EDLKREPRKPEGRVAE) are compositionally biased toward basic and acidic residues. 2 stretches are compositionally biased toward low complexity: residues 33–51 (AGDA…PAAA) and 76–91 (HAPA…PQGG). The active site involves serine 170.

The protein belongs to the methyltransferase superfamily. L-isoaspartyl/D-aspartyl protein methyltransferase family.

Its subcellular location is the cytoplasm. It catalyses the reaction [protein]-L-isoaspartate + S-adenosyl-L-methionine = [protein]-L-isoaspartate alpha-methyl ester + S-adenosyl-L-homocysteine. Its function is as follows. Catalyzes the methyl esterification of L-isoaspartyl residues in peptides and proteins that result from spontaneous decomposition of normal L-aspartyl and L-asparaginyl residues. It plays a role in the repair and/or degradation of damaged proteins. The chain is Protein-L-isoaspartate O-methyltransferase from Burkholderia mallei (strain NCTC 10247).